A 401-amino-acid polypeptide reads, in one-letter code: Aspartokinase (401 aa).

Belongs to the aspartokinase family.

It carries out the reaction L-aspartate + ATP = 4-phospho-L-aspartate + ADP. It participates in amino-acid biosynthesis; L-lysine biosynthesis via DAP pathway; (S)-tetrahydrodipicolinate from L-aspartate: step 1/4. It functions in the pathway amino-acid biosynthesis; L-methionine biosynthesis via de novo pathway; L-homoserine from L-aspartate: step 1/3. The protein operates within amino-acid biosynthesis; L-threonine biosynthesis; L-threonine from L-aspartate: step 1/5. This Rickettsia conorii (strain ATCC VR-613 / Malish 7) protein is Aspartokinase (lysC).